A 435-amino-acid polypeptide reads, in one-letter code: Keratin, type I cytoskeletal 18 (435 aa).

Positions 1-28 (MSLRSSYSVRSSTSQVPVSQMSQMSQMS) are enriched in low complexity. The tract at residues 1-36 (MSLRSSYSVRSSTSQVPVSQMSQMSQMSIKRTTNVP) is disordered. The head stretch occupies residues 2 to 88 (SLRSSYSVRS…TGATGDIMGN (87 aa)). Residues 89-123 (EKMAMQNLNDRLASYLRSETLEQANSKLELKIREA) are coil 1A. Positions 89–399 (EKMAMQNLND…RLLDGGDFKL (311 aa)) constitute an IF rod domain. The tract at residues 124 to 140 (LEKKGPEVCDYSRFQPI) is linker 1. The tract at residues 141-232 (IDDLRRKIFD…KNHDNEVMEL (92 aa)) is coil 1B. A linker 12 region spans residues 233–256 (RNQISHSGVQVDVDAPKGQDLAKI). The tract at residues 257-394 (MEEIRSKYEK…IATYRRLLDG (138 aa)) is coil 2. The tail stretch occupies residues 395-435 (GDFKLQDALEEQKRVKVMTVTQTLVDGKVVSSSTETKEKKF).

It belongs to the intermediate filament family. As to quaternary structure, heterotetramer of two type I and two type II keratins. Keratin-18 associates with keratin-8. In terms of processing, phosphorylated. Proteolytically cleaved by caspases during epithelial cell apoptosis. Abundantly expressed in an even distribution throughout the optic nerve, localizing specifically to the astrocyte domains. Moderately expressed in spinal cord, brain, liver and oocytes.

When phosphorylated, plays a role in filament reorganization. In Carassius auratus (Goldfish), this protein is Keratin, type I cytoskeletal 18 (krt18).